The sequence spans 127 residues: MVQGPNTHRNLDDSPAGPLLILSPCAGTPTRSPAAPDAPDFRLPCHFGRPTRKRGPTTPPLSSPGKLCATGPRRVYSVTVCCGNCGKELTFAVKTSSTSLLGFEHLLNSDLDLLCPRCESRERHGKR.

Positions 2–56 (VQGPNTHRNLDDSPAGPLLILSPCAGTPTRSPAAPDAPDFRLPCHFGRPTRKRGP) are E7 terminal domain. Residues 23–66 (SPCAGTPTRSPAAPDAPDFRLPCHFGRPTRKRGPTTPPLSSPGK) are disordered. A zinc finger lies at 82–118 (CGNCGKELTFAVKTSSTSLLGFEHLLNSDLDLLCPRC). The Nuclear export signal signature appears at 100 to 108 (LLGFEHLLN).

It belongs to the papillomaviridae E7 protein family. In terms of assembly, homodimer. Homooligomer. Interacts with host RB1; this interaction induces dissociation of RB1-E2F1 complex thereby disrupting RB1 activity. Interacts with host EP300; this interaction represses EP300 transcriptional activity. Interacts with protein E2; this interaction inhibits E7 oncogenic activity. Interacts with host TMEM173/STING; this interaction impairs the ability of TMEM173/STING to sense cytosolic DNA and promote the production of type I interferon (IFN-alpha and IFN-beta). Highly phosphorylated.

Its subcellular location is the host cytoplasm. It localises to the host nucleus. Its function is as follows. Plays a role in viral genome replication by driving entry of quiescent cells into the cell cycle. Stimulation of progression from G1 to S phase allows the virus to efficiently use the cellular DNA replicating machinery to achieve viral genome replication. E7 protein has both transforming and trans-activating activities. Induces the disassembly of the E2F1 transcription factor from RB1, with subsequent transcriptional activation of E2F1-regulated S-phase genes. Interferes with host histone deacetylation mediated by HDAC1 and HDAC2, leading to transcription activation. Also plays a role in the inhibition of both antiviral and antiproliferative functions of host interferon alpha. Interaction with host TMEM173/STING impairs the ability of TMEM173/STING to sense cytosolic DNA and promote the production of type I interferon (IFN-alpha and IFN-beta). The sequence is that of Protein E7 from Bovine papillomavirus type 1.